Reading from the N-terminus, the 218-residue chain is Probable transaldolase 2 (218 aa).

The Schiff-base intermediate with substrate role is filled by Lys-83.

The protein belongs to the transaldolase family. Type 3B subfamily.

The protein localises to the cytoplasm. The enzyme catalyses D-sedoheptulose 7-phosphate + D-glyceraldehyde 3-phosphate = D-erythrose 4-phosphate + beta-D-fructose 6-phosphate. Its pathway is carbohydrate degradation; pentose phosphate pathway; D-glyceraldehyde 3-phosphate and beta-D-fructose 6-phosphate from D-ribose 5-phosphate and D-xylulose 5-phosphate (non-oxidative stage): step 2/3. Functionally, transaldolase is important for the balance of metabolites in the pentose-phosphate pathway. This chain is Probable transaldolase 2, found in Listeria innocua serovar 6a (strain ATCC BAA-680 / CLIP 11262).